Reading from the N-terminus, the 219-residue chain is Transmembrane protein 179B (219 aa).

4 helical membrane-spanning segments follow: residues 9-29 (VELL…ATLT), 65-85 (FVAG…FFWV), 98-118 (IGLR…LVSA), and 162-182 (LHTA…ALLL). Ser-206 is subject to Phosphoserine.

Belongs to the TMEM179 family.

The protein localises to the membrane. The polypeptide is Transmembrane protein 179B (Tmem179b) (Mus musculus (Mouse)).